The sequence spans 143 residues: Nucleoside diphosphate kinase (143 aa).

ATP contacts are provided by Lys-11, Phe-59, Arg-87, Thr-93, Arg-104, and Asn-114. His-117 (pros-phosphohistidine intermediate) is an active-site residue.

Belongs to the NDK family. As to quaternary structure, homotetramer. It depends on Mg(2+) as a cofactor.

It localises to the cytoplasm. It carries out the reaction a 2'-deoxyribonucleoside 5'-diphosphate + ATP = a 2'-deoxyribonucleoside 5'-triphosphate + ADP. It catalyses the reaction a ribonucleoside 5'-diphosphate + ATP = a ribonucleoside 5'-triphosphate + ADP. Its function is as follows. Major role in the synthesis of nucleoside triphosphates other than ATP. The ATP gamma phosphate is transferred to the NDP beta phosphate via a ping-pong mechanism, using a phosphorylated active-site intermediate. The chain is Nucleoside diphosphate kinase from Acinetobacter baylyi (strain ATCC 33305 / BD413 / ADP1).